The sequence spans 329 residues: Beta-ketoacyl-[acyl-carrier-protein] synthase III (329 aa).

Residues Cys113 and His255 contribute to the active site. Residues 256-260 (QANQR) form an ACP-binding region. Asn285 is an active-site residue.

This sequence belongs to the thiolase-like superfamily. FabH family. Homodimer.

It localises to the cytoplasm. The enzyme catalyses malonyl-[ACP] + acetyl-CoA + H(+) = 3-oxobutanoyl-[ACP] + CO2 + CoA. It participates in lipid metabolism; fatty acid biosynthesis. Its function is as follows. Catalyzes the condensation reaction of fatty acid synthesis by the addition to an acyl acceptor of two carbons from malonyl-ACP. Catalyzes the first condensation reaction which initiates fatty acid synthesis and may therefore play a role in governing the total rate of fatty acid production. Possesses both acetoacetyl-ACP synthase and acetyl transacylase activities. Its substrate specificity determines the biosynthesis of branched-chain and/or straight-chain of fatty acids. In Chlorobium phaeovibrioides (strain DSM 265 / 1930) (Prosthecochloris vibrioformis (strain DSM 265)), this protein is Beta-ketoacyl-[acyl-carrier-protein] synthase III.